The chain runs to 660 residues: 1-deoxy-D-xylulose-5-phosphate synthase (660 aa).

Residues His-86 and 127-129 contribute to the thiamine diphosphate site; that span reads AHS. Asp-164 provides a ligand contact to Mg(2+). Residues 165 to 166, Asn-196, Tyr-306, and Glu-388 each bind thiamine diphosphate; that span reads GS. Residue Asn-196 coordinates Mg(2+).

It belongs to the transketolase family. DXPS subfamily. In terms of assembly, homodimer. Mg(2+) is required as a cofactor. The cofactor is thiamine diphosphate.

The catalysed reaction is D-glyceraldehyde 3-phosphate + pyruvate + H(+) = 1-deoxy-D-xylulose 5-phosphate + CO2. Its pathway is metabolic intermediate biosynthesis; 1-deoxy-D-xylulose 5-phosphate biosynthesis; 1-deoxy-D-xylulose 5-phosphate from D-glyceraldehyde 3-phosphate and pyruvate: step 1/1. Catalyzes the acyloin condensation reaction between C atoms 2 and 3 of pyruvate and glyceraldehyde 3-phosphate to yield 1-deoxy-D-xylulose-5-phosphate (DXP). This chain is 1-deoxy-D-xylulose-5-phosphate synthase, found in Gluconobacter oxydans (strain 621H) (Gluconobacter suboxydans).